The chain runs to 695 residues: Segment polarity protein dishevelled homolog DVL-1 (695 aa).

Residues 1–85 enclose the DIX domain; it reads MAETKIIYHM…RVVSWLVLAE (85 aa). The tract at residues 89 to 237 is disordered; that stretch reads SDAGSQGTDS…LRQADRASSF (149 aa). Basic residues predominate over residues 142 to 151; that stretch reads SHRRERARRR. Residues 152–171 are compositionally biased toward basic and acidic residues; the sequence is NREEAARTNGHPRGDRRRDV. The span at 176–192 shows a compositional bias: low complexity; it reads DSASTALSSELESSSFV. Serine 194 carries the phosphoserine modification. Low complexity predominate over residues 200–214; the sequence is TSRLSSSTEQSTSSR. Residues 215-228 show a composition bias toward basic residues; it reads LIRKHKRRRRKQRL. Residues 251 to 323 form the PDZ domain; the sequence is TVTLNMERHH…NDDAVRVLRE (73 aa). The region spanning 425–499 is the DEP domain; that stretch reads PDSGLEIRDR…SEQCYYVFGD (75 aa). Residues 543–667 are disordered; the sequence is PGPPPCFPPA…PGGPPVRELA (125 aa). Over residues 551-580 the composition is skewed to low complexity; sequence PAYQDPGFSYGSGSTGSQQSEGSKSSGSTR. Over residues 625–636 the composition is skewed to polar residues; the sequence is SRGSSPRSQASA.

Belongs to the DSH family. In terms of assembly, interacts with CXXC4. Interacts (via PDZ domain) with NXN. Interacts with BRD7 and INVS. Interacts (via PDZ domain) with VANGL1 and VANGL2 (via C-terminus). Interacts with ARRB1; the interaction is enhanced by phosphorylation of DVL1. Interacts with CYLD. Interacts (via PDZ domain) with RYK. Self-associates (via DIX domain) and forms higher homooligomers. Interacts (via PDZ domain) with DACT1 and FZD7, where DACT1 and FZD7 compete for the same binding site. Interacts (via DEP domain) with MUSK; the interaction is direct and mediates the formation a DVL1, MUSK and PAK1 ternary complex involved in AChR clustering. Interacts (via PDZ domain) with TMEM88. Interacts with DCDC2. Interacts with FOXK2. Interacts with PKD1 (via extracellular domain). Interacts (via PDZ domain) with CCDC88C/DAPLE; competes with CCDC88C for binding to frizzled receptor FZD7 and dissociates from CCDC88C following initiation of non-canonical Wnt signaling when CCDC88C displaces DVL1 from ligand-activated FZD7. Ubiquitinated; undergoes both 'Lys-48'-linked ubiquitination, leading to its subsequent degradation by the ubiquitin-proteasome pathway, and 'Lys-63'-linked ubiquitination. The interaction with INVS is required for ubiquitination. Deubiquitinated by CYLD, which acts on 'Lys-63'-linked ubiquitin chains.

The protein localises to the cell membrane. It localises to the cytoplasm. The protein resides in the cytosol. It is found in the cytoplasmic vesicle. Participates in Wnt signaling by binding to the cytoplasmic C-terminus of frizzled family members and transducing the Wnt signal to down-stream effectors. Plays a role both in canonical and non-canonical Wnt signaling. Plays a role in the signal transduction pathways mediated by multiple Wnt genes. Required for LEF1 activation upon WNT1 and WNT3A signaling. DVL1 and PAK1 form a ternary complex with MUSK which is important for MUSK-dependent regulation of AChR clustering during the formation of the neuromuscular junction (NMJ). This Homo sapiens (Human) protein is Segment polarity protein dishevelled homolog DVL-1 (DVL1).